We begin with the raw amino-acid sequence, 285 residues long: Ribosomal RNA small subunit methyltransferase H (285 aa).

S-adenosyl-L-methionine is bound by residues Ala34–His36, Asp51, Phe75, Asp96, and His103. Positions Leu259–Pro285 are disordered.

Belongs to the methyltransferase superfamily. RsmH family.

It localises to the cytoplasm. It catalyses the reaction cytidine(1402) in 16S rRNA + S-adenosyl-L-methionine = N(4)-methylcytidine(1402) in 16S rRNA + S-adenosyl-L-homocysteine + H(+). Specifically methylates the N4 position of cytidine in position 1402 (C1402) of 16S rRNA. This Thermus thermophilus (strain ATCC 27634 / DSM 579 / HB8) protein is Ribosomal RNA small subunit methyltransferase H.